The following is a 330-amino-acid chain: Putative UV-damage endonuclease (330 aa).

Belongs to the uve1/UvsE family.

It is found in the virion. Its function is as follows. Endonuclease for the repair of UV-irradiated DNA. In Acanthamoeba polyphaga mimivirus (APMV), this protein is Putative UV-damage endonuclease.